The chain runs to 192 residues: Ribonuclease HII (192 aa).

Residues 2-187 form the RNase H type-2 domain; the sequence is KNLCGIDEAG…KALGENEIGV (186 aa). A divalent metal cation contacts are provided by D8, E9, and D97.

Belongs to the RNase HII family. Mn(2+) is required as a cofactor. The cofactor is Mg(2+).

The protein localises to the cytoplasm. It catalyses the reaction Endonucleolytic cleavage to 5'-phosphomonoester.. In terms of biological role, endonuclease that specifically degrades the RNA of RNA-DNA hybrids. This is Ribonuclease HII from Aliarcobacter butzleri (strain RM4018) (Arcobacter butzleri).